Here is a 260-residue protein sequence, read N- to C-terminus: Phosphonates import ATP-binding protein PhnC 2 (260 aa).

The ABC transporter domain maps to 4–245 (IQINKATKTY…KNTLRTIYQR (242 aa)). 37-44 (GPSGAGKS) provides a ligand contact to ATP.

The protein belongs to the ABC transporter superfamily. Phosphonates importer (TC 3.A.1.9.1) family. In terms of assembly, the complex is composed of two ATP-binding proteins (PhnC), two transmembrane proteins (PhnE) and a solute-binding protein (PhnD).

The protein localises to the cell inner membrane. The enzyme catalyses phosphonate(out) + ATP + H2O = phosphonate(in) + ADP + phosphate + H(+). Functionally, part of the ABC transporter complex PhnCDE involved in phosphonates import. Responsible for energy coupling to the transport system. This Trichodesmium erythraeum (strain IMS101) protein is Phosphonates import ATP-binding protein PhnC 2.